Here is a 147-residue protein sequence, read N- to C-terminus: Chorion class B protein B.L1 (147 aa).

Positions 1–38 (IGCGRGCGGRGYGGLGYGGLGYGGLGYGGLGGGCGRGF) are left arm. 4 tandem repeats follow at residues 11–15 (GYGGL), 16–20 (GYGGL), 21–25 (GYGGL), and 26–30 (GYGGL). The 4 X 5 AA tandem repeats of G-Y-G-G-L stretch occupies residues 11 to 30 (GYGGLGYGGLGYGGLGYGGL). The tract at residues 39–107 (SGGGLPVATA…GNGAVGITRE (69 aa)) is central domain. Residues 108–147 (GGLGYGAGYGGGYGLGYGGYGGGYGLGYGGYGGCGCGCGY) form a right arm (Gly-rich tandem repeats) region.

The protein belongs to the chorion protein family.

In terms of biological role, this protein is one of many from the eggshell of the silk moth. The sequence is that of Chorion class B protein B.L1 from Bombyx mori (Silk moth).